We begin with the raw amino-acid sequence, 917 residues long: Protein translocase subunit SecA (917 aa).

ATP contacts are provided by residues glutamine 87, glycine 105 to threonine 109, and aspartate 516. Zn(2+)-binding residues include cysteine 901, cysteine 903, cysteine 912, and histidine 913.

It belongs to the SecA family. As to quaternary structure, monomer and homodimer. Part of the essential Sec protein translocation apparatus which comprises SecA, SecYEG and auxiliary proteins SecDF-YajC and YidC. It depends on Zn(2+) as a cofactor.

The protein resides in the cell inner membrane. The protein localises to the cytoplasm. It carries out the reaction ATP + H2O + cellular proteinSide 1 = ADP + phosphate + cellular proteinSide 2.. Part of the Sec protein translocase complex. Interacts with the SecYEG preprotein conducting channel. Has a central role in coupling the hydrolysis of ATP to the transfer of proteins into and across the cell membrane, serving both as a receptor for the preprotein-SecB complex and as an ATP-driven molecular motor driving the stepwise translocation of polypeptide chains across the membrane. The protein is Protein translocase subunit SecA of Verminephrobacter eiseniae (strain EF01-2).